The primary structure comprises 1216 residues: MKLIPFLSEEEIQKLQEAEANSSKEQKKTAEQIEAIYTSGQNILVSASAGSGKTFVMAERILDQLARGVEISQLFISTFTVKAANELKERLEKKISKKIQETDDVDLKQHLGRQLADLPNAAIGTMDSFTQKFLGKHGYLLDIAPNFRILQNQSEQLLLENEVFHEVFEAHYQGKQKETFSHLLKNFAGRGKDERGLRQQVYKIYDFLQSTSNPQKWLSDSFLKGFEKADFTSEKEKLTEQIKQALWDLESFFRYHLDNDAKEFAKAAYLENVQLILDEIGSLNQESDSQAYQAVLAHVVAISKEKNGRALTNASRKADLKPLADAYNEERKTQFAKLGQLSDQITILDYQERYHGDTWKLAKTFQSFMSDFVEAYRQRKRQENAFEFADISHYTIEILENFPQVRESYQERFHEVMVDEYQDTNHIQERMLELLSNGHNRFMVGDIKQSIYRFRQADPQIFNEKFQRYAQNPQEGKLILLKENFRSSSEVLSATNDVFERLMDQEVGEINYDNKHQLVFANTKLTPNPDNKAEFLLYDKDDTGEEEESQTETKLTGEMRLVIKEILKLHQEKGVAFKEIALLTSSRSRNDQILLALSEYGIPVKTDGEQNNYLQSLEVQVMLDTLRVIHNPLQDYALVALMKSPMFGFDEDELARLSLQKAEDKVHENLYEKLVNAQKMASSQKGLIHTALAEKLKQFMDILASWRLYAKTHSLYDLIWKIYNDRFYYDYVGALPNGPARQANLYALALRADQFEKSNFKGLPRFIRMIDQVLEAQHDLASVVVAPPKDAVELMTIHKSKGLEFPYVFILNMDQDFNKQDSMSEVILSRQNGLGVKYIAKMETGAVEDHYPKTIKLSIPSLTYRQNEEELQLASYSEQMRLLYVAMTRAEKKLYLVGKGSREKLESKEYPAAKNGKLNSNTRLQARNFQDWLWAISKVFTKDKLNFSYRFIGEDQLTREAIGELETKSPLQDSSQADNRQSDTIKEALEMLKEVEVYNTLHRAAIELPSVQTPSQIKKFYEPVMDMEGVEIAGQGQSVGKKISFDLPDFSTKEKVTGAEIGSATHELMQRIDLSQQLTLASLTETLKQVQTSQAVRDKINLDKILAFFDTVLGQEILANTDHLYREQPFSMLKRDQKSQEDFVVRGILDGYLLYENKIVLFDYKTDRYDEPSQLVDRYRGQLALYEEALSRAYSIENIEKYLILLGKDEVQVVKV.

In terms of domain architecture, UvrD-like helicase ATP-binding spans 26–488; it reads QKKTAEQIEA…ILLKENFRSS (463 aa). Residue 47-54 participates in ATP binding; that stretch reads ASAGSGKT. Residues 515-802 form the UvrD-like helicase C-terminal domain; that stretch reads KHQLVFANTK…ELMTIHKSKG (288 aa).

It belongs to the helicase family. AddA subfamily. Heterodimer of AddA and AddB/RexB. Mg(2+) is required as a cofactor.

It catalyses the reaction Couples ATP hydrolysis with the unwinding of duplex DNA by translocating in the 3'-5' direction.. The catalysed reaction is ATP + H2O = ADP + phosphate + H(+). In terms of biological role, the heterodimer acts as both an ATP-dependent DNA helicase and an ATP-dependent, dual-direction single-stranded exonuclease. Recognizes the chi site generating a DNA molecule suitable for the initiation of homologous recombination. The AddA nuclease domain is required for chi fragment generation; this subunit has the helicase and 3' -&gt; 5' nuclease activities. In Streptococcus pneumoniae (strain Hungary19A-6), this protein is ATP-dependent helicase/nuclease subunit A.